The sequence spans 412 residues: Lipoyl synthase, mitochondrial (412 aa).

Residues Met-1 to Phe-28 constitute a mitochondrion transit peptide. [4Fe-4S] cluster contacts are provided by Cys-124, Cys-129, Cys-135, Cys-155, Cys-159, Cys-162, and Ser-372. The Radical SAM core domain occupies Gly-138 to Leu-361.

It belongs to the radical SAM superfamily. Lipoyl synthase family. Requires [4Fe-4S] cluster as cofactor.

The protein localises to the mitochondrion. The enzyme catalyses [[Fe-S] cluster scaffold protein carrying a second [4Fe-4S](2+) cluster] + N(6)-octanoyl-L-lysyl-[protein] + 2 oxidized [2Fe-2S]-[ferredoxin] + 2 S-adenosyl-L-methionine + 4 H(+) = [[Fe-S] cluster scaffold protein] + N(6)-[(R)-dihydrolipoyl]-L-lysyl-[protein] + 4 Fe(3+) + 2 hydrogen sulfide + 2 5'-deoxyadenosine + 2 L-methionine + 2 reduced [2Fe-2S]-[ferredoxin]. Its pathway is protein modification; protein lipoylation via endogenous pathway; protein N(6)-(lipoyl)lysine from octanoyl-[acyl-carrier-protein]: step 2/2. In terms of biological role, catalyzes the radical-mediated insertion of two sulfur atoms into the C-6 and C-8 positions of the octanoyl moiety bound to the lipoyl domains of lipoate-dependent enzymes, thereby converting the octanoylated domains into lipoylated derivatives. The protein is Lipoyl synthase, mitochondrial of Fusarium vanettenii (strain ATCC MYA-4622 / CBS 123669 / FGSC 9596 / NRRL 45880 / 77-13-4) (Fusarium solani subsp. pisi).